The chain runs to 132 residues: Holo-[acyl-carrier-protein] synthase (132 aa).

Mg(2+) is bound by residues D8 and E62.

It belongs to the P-Pant transferase superfamily. AcpS family. Mg(2+) is required as a cofactor.

It is found in the cytoplasm. It carries out the reaction apo-[ACP] + CoA = holo-[ACP] + adenosine 3',5'-bisphosphate + H(+). Its function is as follows. Transfers the 4'-phosphopantetheine moiety from coenzyme A to a Ser of acyl-carrier-protein. The polypeptide is Holo-[acyl-carrier-protein] synthase (Leptothrix cholodnii (strain ATCC 51168 / LMG 8142 / SP-6) (Leptothrix discophora (strain SP-6))).